Here is a 538-residue protein sequence, read N- to C-terminus: Telomerase Cajal body protein 1 (538 aa).

A disordered region spans residues 1–53 (MKTSEERLVVPDSLSSDQAPAPVPQGSPVDENTDSEPVPQPCGGDDRSQVAAD). Phosphoserine is present on residues Ser27 and Ser87. The segment at 92–128 (EQELSENVSLPVEDTNQPELASGEDVEGVSEEPGPVD) is disordered. Residues 113-128 (SGEDVEGVSEEPGPVD) show a composition bias toward acidic residues. 6 WD repeats span residues 154-194 (AHSE…YSAT), 210-255 (EGDT…LRAS), 260-301 (NHLD…RDCE), 311-352 (GQSG…ALLG), 353-393 (GHQG…HLLW), and 399-438 (VTTN…GDSS). 2 disordered regions span residues 471–491 (QRMF…GDLP) and 509–538 (CGGG…DGLI). Position 478 is a phosphothreonine (Thr478). Ser480 bears the Phosphoserine mark. Over residues 529 to 538 (RAEGCGDGLI) the composition is skewed to gly residues.

It belongs to the TCAB1 family. Component of the telomerase holoenzyme complex composed of one molecule of TERT, one molecule of WRAP53/TCAB1, two molecules of H/ACA ribonucleoprotein complex subunits DKC1, NOP10, NHP2 and GAR1, and a telomerase RNA template component (TERC). The telomerase holoenzyme complex is associated with TEP1, SMG6/EST1A and POT1. Interacts with the chaperonin-containing T-complex (TRiC) complex; which mediates the folding of WRAP53/TCAB1. Interacts with COIL. Interacts with SMN1. Interacts with RNF8. Interacts with histone H2AX. As to expression, preferentially expressed in testis.

The protein resides in the nucleus. The protein localises to the cajal body. Its subcellular location is the chromosome. It is found in the telomere. RNA chaperone that plays a key role in telomere maintenance and RNA localization to Cajal bodies. Specifically recognizes and binds the Cajal body box (CAB box) present in both small Cajal body RNAs (scaRNAs) and telomerase RNA template component (TERC). Essential component of the telomerase holoenzyme complex, a ribonucleoprotein complex essential for the replication of chromosome termini that elongates telomeres in most eukaryotes. In the telomerase holoenzyme complex, required to stimulate the catalytic activity of the complex. Acts by specifically binding the CAB box of the TERC RNA and controlling the folding of the CR4/CR5 region of the TERC RNA, a critical step for telomerase activity. In addition, also controls telomerase holoenzyme complex localization to Cajal body. During S phase, required for delivery of TERC to telomeres during S phase and for telomerase activity. In addition to its role in telomere maintenance, also required for Cajal body formation, probably by mediating localization of scaRNAs to Cajal bodies. Also plays a role in DNA repair: relocalizes to sites of DNA double-strand breaks in response to DNA damage and promotes the repair of DNA double-strand breaks. Acts by recruiting the ubiquitin ligase RNF8 to DNA breaks and promote both homologous recombination (HR) and non-homologous end joining (NHEJ). The sequence is that of Telomerase Cajal body protein 1 from Mesocricetus auratus (Golden hamster).